The primary structure comprises 252 residues: MSSVDLNADLGEGFGVWALGDDDAMLDIVTSANVACGFHAGDPATLRRVCEAAAARGVRIGAQVSYRDLAGFGRRFIDVSSEDLIADVMYQIGALSALAAAAGSSVSYVKPHGALYNAVVTNRLQAHALAAAVHAVDPALPVLGLAGSVFFGAAEELGLRTVPEAFADRAYRPDGRLVSRRERNSVLHDVDEIAERVISMVSRGRVHAVDGSTIPITVESVCVHGDSPGAVQIATAVRKRLVAEGVTLASFS.

The protein belongs to the LamB/PxpA family. In terms of assembly, forms a complex composed of PxpA, PxpB and PxpC.

The enzyme catalyses 5-oxo-L-proline + ATP + 2 H2O = L-glutamate + ADP + phosphate + H(+). In terms of biological role, catalyzes the cleavage of 5-oxoproline to form L-glutamate coupled to the hydrolysis of ATP to ADP and inorganic phosphate. This chain is 5-oxoprolinase subunit A, found in Mycolicibacterium gilvum (strain PYR-GCK) (Mycobacterium gilvum (strain PYR-GCK)).